The chain runs to 481 residues: Lincomycin resistance protein (481 aa).

14 helical membrane-spanning segments follow: residues 30-50 (WVTLVFLAVLQLLIAVDVTVV), 67-87 (QLTWVVTGYTVVGGGLLMVGG), 99-119 (LLFGAFLFGASSLAAGLAPNL), 127-147 (FGQGAGEALSLPAAMSLIACS), 162-182 (VASVGLVLGFLLSGVITQLFS), 185-205 (WIFLINIPLVSLVLVAVLLLV), 215-235 (PVDLPGALLFTAAPLLLIFGV), 245-265 (LPLAVGSLLAAAVCAAAFVAV), 285-305 (LVANGATVLLSAALSTSFFLL), 318-338 (IEAGLSFLPLGLSLILACVLV), 340-360 (GLIERIGTTGAAVLGMALAGP), 374-394 (LLTSVFPGMILLLRMATGLVA), 421-441 (LGGASGIAVYVSIGFSPHLGG), and 446-466 (FTVAYSLAGIGLIAAVLAVLA).

The protein belongs to the major facilitator superfamily. TCR/Tet family.

It is found in the cell membrane. Functionally, proton-dependent transporter. May mediate the efflux of lincomycin. This is Lincomycin resistance protein (lmrA) from Streptomyces lincolnensis.